Consider the following 796-residue polypeptide: Disintegrin and metalloproteinase domain-containing protein B (796 aa).

The first 23 residues, Met-1–Ala-23, serve as a signal peptide directing secretion. The Extracellular portion of the chain corresponds to Arg-24–Pro-706. N-linked (GlcNAc...) asparagine glycans are attached at residues Asn-33, Asn-226, Asn-313, and Asn-407. The region spanning Arg-271 to Thr-510 is the Peptidase M12B domain. 3 disulfide bridges follow: Cys-395–Cys-495, Cys-448–Cys-459, and Cys-580–Cys-600. His-431 provides a ligand contact to Zn(2+). Glu-432 is an active-site residue. 2 residues coordinate Zn(2+): His-435 and His-441. In terms of domain architecture, Disintegrin spans Gly-519 to Asn-608. Residues Ile-707–Ile-727 traverse the membrane as a helical segment. At Cys-728 to Ala-796 the chain is on the cytoplasmic side. The segment at Arg-737–Ala-796 is disordered. A compositionally biased stretch (pro residues) spans Val-775–Tyr-786.

The cofactor is Zn(2+).

Its subcellular location is the membrane. In terms of biological role, probable zinc protease. In Arthroderma otae (strain ATCC MYA-4605 / CBS 113480) (Microsporum canis), this protein is Disintegrin and metalloproteinase domain-containing protein B (ADM-B).